A 124-amino-acid chain; its full sequence is ATP synthase epsilon chain (124 aa).

It belongs to the ATPase epsilon chain family. As to quaternary structure, F-type ATPases have 2 components, CF(1) - the catalytic core - and CF(0) - the membrane proton channel. CF(1) has five subunits: alpha(3), beta(3), gamma(1), delta(1), epsilon(1). CF(0) has three main subunits: a, b and c.

Its subcellular location is the cell membrane. Functionally, produces ATP from ADP in the presence of a proton gradient across the membrane. The chain is ATP synthase epsilon chain from Corynebacterium efficiens (strain DSM 44549 / YS-314 / AJ 12310 / JCM 11189 / NBRC 100395).